A 93-amino-acid polypeptide reads, in one-letter code: Alpha-defensin 13 (93 aa).

Residues 1–19 (MKTLVLLSALVLLAFQVQA) form the signal peptide. Residues 20-58 (DPIQNTDEETKTEEQPGEEDQAVSVSFGDPEGTSLQEES) constitute a propeptide that is removed on maturation. A disordered region spans residues 22–54 (IQNTDEETKTEEQPGEEDQAVSVSFGDPEGTSL). 3 cysteine pairs are disulfide-bonded: Cys64/Cys92, Cys66/Cys81, and Cys71/Cys91.

This sequence belongs to the alpha-defensin family. As to expression, paneth cells of the small bowel.

The protein localises to the secreted. Functionally, probably contributes to the antimicrobial barrier function of the small bowel mucosa. This is Alpha-defensin 13 (Defa13) from Mus musculus (Mouse).